The sequence spans 290 residues: Membrane protein insertase YidC 2 (290 aa).

The signal sequence occupies residues 1-19 (MKKKALLPLFLGIMIFLAG). C20 carries the N-palmitoyl cysteine lipid modification. C20 is lipidated: S-diacylglycerol cysteine. A run of 5 helical transmembrane segments spans residues 56-76 (FGLA…PFML), 134-154 (MLGC…YFVL), 176-196 (PDIW…VVSS), 211-231 (MVIS…ALGL), and 232-252 (YWSV…IYYS). The disordered stretch occupies residues 266–290 (YEREHNPSSKKKGKNTQVVSKKNKK). A compositionally biased stretch (polar residues) spans 280 to 290 (NTQVVSKKNKK).

Belongs to the OXA1/ALB3/YidC family. Type 2 subfamily.

It is found in the cell membrane. Its function is as follows. Required for the insertion and/or proper folding and/or complex formation of integral membrane proteins into the membrane. Involved in integration of membrane proteins that insert both dependently and independently of the Sec translocase complex, as well as at least some lipoproteins. The sequence is that of Membrane protein insertase YidC 2 from Staphylococcus epidermidis (strain ATCC 35984 / DSM 28319 / BCRC 17069 / CCUG 31568 / BM 3577 / RP62A).